Here is a 508-residue protein sequence, read N- to C-terminus: Light-independent protochlorophyllide reductase subunit B (508 aa).

Asp36 is a binding site for [4Fe-4S] cluster. Asp294 (proton donor) is an active-site residue. 429 to 430 (GM) contacts substrate.

It belongs to the ChlB/BchB/BchZ family. As to quaternary structure, protochlorophyllide reductase is composed of three subunits; ChlL, ChlN and ChlB. Forms a heterotetramer of two ChlB and two ChlN subunits. [4Fe-4S] cluster serves as cofactor.

It catalyses the reaction chlorophyllide a + oxidized 2[4Fe-4S]-[ferredoxin] + 2 ADP + 2 phosphate = protochlorophyllide a + reduced 2[4Fe-4S]-[ferredoxin] + 2 ATP + 2 H2O. It functions in the pathway porphyrin-containing compound metabolism; chlorophyll biosynthesis (light-independent). In terms of biological role, component of the dark-operative protochlorophyllide reductase (DPOR) that uses Mg-ATP and reduced ferredoxin to reduce ring D of protochlorophyllide (Pchlide) to form chlorophyllide a (Chlide). This reaction is light-independent. The NB-protein (ChlN-ChlB) is the catalytic component of the complex. The protein is Light-independent protochlorophyllide reductase subunit B of Crocosphaera subtropica (strain ATCC 51142 / BH68) (Cyanothece sp. (strain ATCC 51142)).